We begin with the raw amino-acid sequence, 537 residues long: Glutamate--tRNA ligase (537 aa).

Positions 9–19 (PSPTGLQHIGG) match the 'HIGH' region motif. Zn(2+) contacts are provided by Cys125, Cys127, Cys152, and Glu154. Positions 270–274 (KLSKR) match the 'KMSKS' region motif. Residue Lys273 participates in ATP binding.

It belongs to the class-I aminoacyl-tRNA synthetase family. Glutamate--tRNA ligase type 1 subfamily. In terms of assembly, monomer. Zn(2+) serves as cofactor.

The protein resides in the cytoplasm. The enzyme catalyses tRNA(Glu) + L-glutamate + ATP = L-glutamyl-tRNA(Glu) + AMP + diphosphate. In terms of biological role, catalyzes the attachment of glutamate to tRNA(Glu) in a two-step reaction: glutamate is first activated by ATP to form Glu-AMP and then transferred to the acceptor end of tRNA(Glu). This Treponema pallidum (strain Nichols) protein is Glutamate--tRNA ligase.